We begin with the raw amino-acid sequence, 350 residues long: Neuronal-specific septin-3 (350 aa).

The segment covering 1-10 has biased composition (basic and acidic residues); that stretch reads MSKGLPEART. The interval 1–29 is disordered; that stretch reads MSKGLPEARTDAAMSELVPEPRPKPAVPM. Positions 58 to 331 constitute a Septin-type G domain; the sequence is TGFDFNIMVV…ETYRAKRLND (274 aa). The interval 68–75 is G1 motif; it reads GQSGLGKS. 68–75 contributes to the GTP binding site; that stretch reads GQSGLGKS. S91 carries the phosphoserine modification. GTP is bound at residue T102. A G3 motif region spans residues 125-128; sequence DTPG. The segment at 207 to 210 is G4 motif; the sequence is AKAD. GTP contacts are provided by residues 208–216, G265, and R280; that span reads KADTMTLEE. Residues 328 to 350 are disordered; it reads RLNDNGGLPPVSVDTEESHDSNP.

The protein belongs to the TRAFAC class TrmE-Era-EngA-EngB-Septin-like GTPase superfamily. Septin GTPase family. Septins polymerize into heterooligomeric protein complexes that form filaments, and can associate with cellular membranes, actin filaments and microtubules. GTPase activity is required for filament formation. In terms of processing, phosphorylated by PKG on serine residues. Phosphorylated by PKG on Ser-91. As to expression, expressed in the brain including the cerebrum, hippocampus and cerebellum (at protein level).

It localises to the cytoplasm. The protein resides in the cytoskeleton. The protein localises to the synapse. In terms of biological role, filament-forming cytoskeletal GTPase. May play a role in cytokinesis (Potential). In Mus musculus (Mouse), this protein is Neuronal-specific septin-3.